The primary structure comprises 684 residues: Transcriptional regulatory protein RCO1 (684 aa).

Residue M1 is modified to N-acetylmethionine. Residues 1–48 form a disordered region; it reads MDTSKKDTTRSPSHSNSSSPSSSSLSSSSSKEKKRPKRLSSQNVNYDL. A compositionally biased stretch (low complexity) spans 10 to 29; it reads RSPSHSNSSSPSSSSLSSSS. S68 is subject to Phosphoserine. The PHD-type 1 zinc finger occupies 260 to 309; that stretch reads EDFCSACNQSGSFLCCDTCPKSFHFLCLDPPIDPNNLPKGDWHCNECKFK. The segment at 414-472 adopts a PHD-type 2; atypical zinc-finger fold; that stretch reads FLICYKCNQTRLGSWSHPENSRLIMTCDYCQTPWHLDCVPRASFKNLGSKWKCPLHSPT. A Phosphoserine modification is found at S683.

In terms of assembly, component of the RPD3C(S) complex composed of at least EAF3, RCO1, RPD3, SIN3, and UME1.

It localises to the nucleus. Functionally, catalytic component of the RPD3C(S) histone deacetylase complex responsible for the deacetylation of lysine residues on the N-terminal part of the core histones (H2A, H2B, H3 and H4). Histone deacetylation gives a tag for epigenetic repression and plays an important role in transcriptional regulation, cell cycle progression, DNA damage response, osmotic stress response and developmental events. The polypeptide is Transcriptional regulatory protein RCO1 (RCO1) (Saccharomyces cerevisiae (strain ATCC 204508 / S288c) (Baker's yeast)).